Here is a 147-residue protein sequence, read N- to C-terminus: Transthyretin (147 aa).

An N-terminal signal peptide occupies residues 1–20 (MASFRLLLLCLAGLVFVSEA). Residue Cys30 is modified to Sulfocysteine. Lys35 lines the L-thyroxine pocket. Residue Glu62 is modified to 4-carboxyglutamate. Ser72 is modified (phosphoserine). Glu74 contributes to the L-thyroxine binding site. N-linked (GlcNAc...) asparagine glycosylation is present at Asn118. Ser137 contributes to the L-thyroxine binding site.

The protein belongs to the transthyretin family. In terms of assembly, homotetramer. Dimer of dimers. In the homotetramer, subunits assemble around a central channel that can accommodate two ligand molecules. Interacts with RBP4. Sulfonation of the reactive cysteine Cys-30 enhances the stability of the native conformation of TTR, avoiding misassembly of the protein leading to amyloid formation. In terms of tissue distribution, highly expressed in the choroid plexus.

It localises to the secreted. Thyroid hormone-binding protein. Probably transports thyroxine from the bloodstream to the brain. This Ovis aries (Sheep) protein is Transthyretin (TTR).